The sequence spans 1240 residues: Pectate lyase L (1240 aa).

Residues 1-26 (MRNCKGLSILLCFLLVFFAMPFPAVA) form the signal peptide. 2 has catalytic activity regions span residues 27-551 (EEAE…VTVR) and 545-1240 (TLKV…KSIK). Positions 325, 349, 350, 1049, 1073, 1074, and 1077 each coordinate Ca(2+). The active-site Proton acceptor is the Lys1117.

This sequence belongs to the polysaccharide lyase 9 family. The cofactor is Ca(2+).

It is found in the secreted. It carries out the reaction Eliminative cleavage of (1-&gt;4)-alpha-D-galacturonan to give oligosaccharides with 4-deoxy-alpha-D-galact-4-enuronosyl groups at their non-reducing ends.. Inhibited by the metal chelator ethylenediaminetetraacetic acid (EDTA). Cleaves polygalacturonate or partially methylated pectin. When assayed on polygalacturonate or on pectin, it releases monogalacturonate as the principal product. The polypeptide is Pectate lyase L (Thermoclostridium stercorarium (Clostridium stercorarium)).